The sequence spans 166 residues: Lipoprotein signal peptidase (166 aa).

A run of 3 helical transmembrane segments spans residues 12 to 32 (WLWL…LILQ), 70 to 90 (WFFA…MYRS), and 102 to 122 (ALII…GFVV). Catalysis depends on residues Asp123 and Asp141. The helical transmembrane segment at 137 to 157 (FNLADSAICIGAALIVLEGFL) threads the bilayer.

Belongs to the peptidase A8 family.

The protein localises to the cell inner membrane. It catalyses the reaction Release of signal peptides from bacterial membrane prolipoproteins. Hydrolyzes -Xaa-Yaa-Zaa-|-(S,diacylglyceryl)Cys-, in which Xaa is hydrophobic (preferably Leu), and Yaa (Ala or Ser) and Zaa (Gly or Ala) have small, neutral side chains.. Its pathway is protein modification; lipoprotein biosynthesis (signal peptide cleavage). In terms of biological role, this protein specifically catalyzes the removal of signal peptides from prolipoproteins. The polypeptide is Lipoprotein signal peptidase (Salmonella choleraesuis (strain SC-B67)).